We begin with the raw amino-acid sequence, 229 residues long: MDIGKLVTRRSSEHPAGAFLFEPSVLIPFERAWRDQQLWQQRLFEEPSSPEAVWILQHPACYTLGRGASAQHLHFDPNEPPAPLHRIDRGGEVTHHLPGQLVAYPVLDLQRHTPDLHLYLRQLELVVIDVLRDLGLQGECLPGLTGVWVGRCKVAAIGVGCRRWITQHGLALNVDCELQGFAEITPCGLVGHQVGRLCDWMPGLRVSDVQPLLRQSLAARFHLAWIPQA.

The 179-residue stretch at 47–225 (PSSPEAVWIL…SLAARFHLAW (179 aa)) folds into the BPL/LPL catalytic domain. Residues 89–96 (RGGEVTHH), 156–158 (AIG), and 169–171 (GLA) each bind substrate. Residue Cys187 is the Acyl-thioester intermediate of the active site.

It belongs to the LipB family.

The protein localises to the cytoplasm. The enzyme catalyses octanoyl-[ACP] + L-lysyl-[protein] = N(6)-octanoyl-L-lysyl-[protein] + holo-[ACP] + H(+). The protein operates within protein modification; protein lipoylation via endogenous pathway; protein N(6)-(lipoyl)lysine from octanoyl-[acyl-carrier-protein]: step 1/2. Its function is as follows. Catalyzes the transfer of endogenously produced octanoic acid from octanoyl-acyl-carrier-protein onto the lipoyl domains of lipoate-dependent enzymes. Lipoyl-ACP can also act as a substrate although octanoyl-ACP is likely to be the physiological substrate. This Synechococcus sp. (strain CC9902) protein is Octanoyltransferase.